Consider the following 231-residue polypeptide: Large ribosomal subunit protein uL1 (231 aa).

This sequence belongs to the universal ribosomal protein uL1 family. Part of the 50S ribosomal subunit.

Its function is as follows. Binds directly to 23S rRNA. The L1 stalk is quite mobile in the ribosome, and is involved in E site tRNA release. Protein L1 is also a translational repressor protein, it controls the translation of the L11 operon by binding to its mRNA. This chain is Large ribosomal subunit protein uL1, found in Polaromonas sp. (strain JS666 / ATCC BAA-500).